The chain runs to 312 residues: MFTGDRGLNALLESGVLQQEVPLANYTTWRVGGPAQWLAEPNNAEQCLELLQWAKAEGLTTRVIGAGSNLLIADAGLPGLTLCLRRLQGSQLDAESGQVKALAGEPLPTLARRAARLGLHGLEWAVGIPGTVGGAAAMNAGAQGGSTADCLTAVEVIDQSLTDTVKTTTLLSNTDLAYDYRHSLLQGSDQMVVAAQFQLEPGHDAKELMRKTSGNLSHRTTTQPYQWPSCGSVFRNPEPEKAGQLIEGLGLKGRRIGGAEVSSVHANFIVNVGDATADDIRALIDLVQNEVERMNGITLHPEVKRLGFQTTD.

Residues 30 to 202 (RVGGPAQWLA…VAAQFQLEPG (173 aa)) form the FAD-binding PCMH-type domain. Arg-181 is an active-site residue. Catalysis depends on Ser-232, which acts as the Proton donor. Glu-302 is a catalytic residue.

It belongs to the MurB family. It depends on FAD as a cofactor.

The protein localises to the cytoplasm. It carries out the reaction UDP-N-acetyl-alpha-D-muramate + NADP(+) = UDP-N-acetyl-3-O-(1-carboxyvinyl)-alpha-D-glucosamine + NADPH + H(+). It participates in cell wall biogenesis; peptidoglycan biosynthesis. Cell wall formation. This Synechococcus sp. (strain CC9311) protein is UDP-N-acetylenolpyruvoylglucosamine reductase.